The primary structure comprises 194 residues: RNA polymerase II subunit A C-terminal domain phosphatase SSU72 like protein 5 (194 aa).

This sequence belongs to the SSU72 phosphatase family.

It localises to the nucleus. It carries out the reaction O-phospho-L-seryl-[protein] + H2O = L-seryl-[protein] + phosphate. The catalysed reaction is O-phospho-L-threonyl-[protein] + H2O = L-threonyl-[protein] + phosphate. Its function is as follows. Protein phosphatase that catalyzes the dephosphorylation of the C-terminal domain of RNA polymerase II. Plays a role in RNA processing and termination. In Homo sapiens (Human), this protein is RNA polymerase II subunit A C-terminal domain phosphatase SSU72 like protein 5.